Reading from the N-terminus, the 303-residue chain is UDP-N-acetylenolpyruvoylglucosamine reductase (303 aa).

In terms of domain architecture, FAD-binding PCMH-type spans 27–191 (VGGPAARLYK…ISAKLQLTPG (165 aa)). The active site involves R171. S220 functions as the Proton donor in the catalytic mechanism. E291 is a catalytic residue.

This sequence belongs to the MurB family. The cofactor is FAD.

The protein resides in the cytoplasm. It catalyses the reaction UDP-N-acetyl-alpha-D-muramate + NADP(+) = UDP-N-acetyl-3-O-(1-carboxyvinyl)-alpha-D-glucosamine + NADPH + H(+). Its pathway is cell wall biogenesis; peptidoglycan biosynthesis. Functionally, cell wall formation. The polypeptide is UDP-N-acetylenolpyruvoylglucosamine reductase (Legionella pneumophila (strain Paris)).